A 218-amino-acid polypeptide reads, in one-letter code: Sec-independent protein translocase protein TatB (218 aa).

A helical membrane pass occupies residues 1–21 (MFDIGFSELLLVLVIGLVVLG). Disordered regions lie at residues 126–145 (AESA…DVDK) and 174–218 (SSVD…GGDR). Residues 199-218 (HSTDSHGADQPRTHQPGGDR) are compositionally biased toward basic and acidic residues.

The protein belongs to the TatB family. In terms of assembly, the Tat system comprises two distinct complexes: a TatABC complex, containing multiple copies of TatA, TatB and TatC subunits, and a separate TatA complex, containing only TatA subunits. Substrates initially bind to the TatABC complex, which probably triggers association of the separate TatA complex to form the active translocon.

The protein localises to the cell inner membrane. In terms of biological role, part of the twin-arginine translocation (Tat) system that transports large folded proteins containing a characteristic twin-arginine motif in their signal peptide across membranes. Together with TatC, TatB is part of a receptor directly interacting with Tat signal peptides. TatB may form an oligomeric binding site that transiently accommodates folded Tat precursor proteins before their translocation. This chain is Sec-independent protein translocase protein TatB, found in Yersinia enterocolitica serotype O:8 / biotype 1B (strain NCTC 13174 / 8081).